The chain runs to 320 residues: Olfactory receptor 52W1 (320 aa).

The Extracellular segment spans residues 1–30; that stretch reads MAETLQLNSTFLHPNFFILTGFPGLGSAQT. The N-linked (GlcNAc...) asparagine glycan is linked to Asn-8. Residues 31-51 form a helical membrane-spanning segment; that stretch reads WLTLVFGPIYLLALLGNGALP. Residues 52-59 are Cytoplasmic-facing; the sequence is AVVWIDST. A helical membrane pass occupies residues 60–80; sequence LHQPMFLLLAILAATDLGLAT. Residues 81–104 lie on the Extracellular side of the membrane; sequence SIAPGLLAVLWLGPRSVPYAVCLV. The chain crosses the membrane as a helical span at residues 105-125; sequence QMFFVHALTAMESGVLLAMAC. At 126–144 the chain is on the cytoplasmic side; it reads DRAAAIGRPLHYPVLVTKA. A helical transmembrane segment spans residues 145 to 165; that stretch reads CVGYAALALALKAVAIVVPFP. The Extracellular portion of the chain corresponds to 166–201; that stretch reads LLVAKFEHFQAKTIGHTYCAHMAVVELVVGNTQATN. A helical transmembrane segment spans residues 202-222; it reads LYGLALSLAISGMDILGITGS. Topologically, residues 223 to 242 are cytoplasmic; sequence YGLIAHAVLQLPTREAHAKA. A helical transmembrane segment spans residues 243 to 263; it reads FGTCSSHICVILAFYIPGLFS. At 264-279 the chain is on the extracellular side; it reads YLTHRFGHHTVPKPVH. A helical membrane pass occupies residues 280–300; that stretch reads ILLSNIYLLLPPALNPLIYGA. Residues 301–320 are Cytoplasmic-facing; sequence RTKQIRDRLLETFTFRKSPL.

Belongs to the G-protein coupled receptor 1 family.

Its subcellular location is the cell membrane. Functionally, odorant receptor. This is Olfactory receptor 52W1 (OR52W1) from Homo sapiens (Human).